The sequence spans 430 residues: Tol-Pal system protein TolB (430 aa).

The signal sequence occupies residues 1–21 (MRRFVTLLIALLCLSATAVQA).

Belongs to the TolB family. The Tol-Pal system is composed of five core proteins: the inner membrane proteins TolA, TolQ and TolR, the periplasmic protein TolB and the outer membrane protein Pal. They form a network linking the inner and outer membranes and the peptidoglycan layer.

It localises to the periplasm. In terms of biological role, part of the Tol-Pal system, which plays a role in outer membrane invagination during cell division and is important for maintaining outer membrane integrity. In Syntrophotalea carbinolica (strain DSM 2380 / NBRC 103641 / GraBd1) (Pelobacter carbinolicus), this protein is Tol-Pal system protein TolB.